Here is a 217-residue protein sequence, read N- to C-terminus: Membrane-spanning 4-domains subfamily A member 6C (217 aa).

The span at 1-20 (MIPQVVTNETITTISPNGIN) shows a compositional bias: polar residues. The tract at residues 1–33 (MIPQVVTNETITTISPNGINFPQKDESQPTQQR) is disordered. Residues 1–46 (MIPQVVTNETITTISPNGINFPQKDESQPTQQRQDSLKKHLKAEIK) lie on the Cytoplasmic side of the membrane. Residues 47–67 (VIVAIQIMCAVTVLALGIILA) form a helical membrane-spanning segment. Over 68–84 (SVPPVPYFNSVFSVLLK) the chain is Extracellular. The helical transmembrane segment at 85 to 105 (SGYPFIGALFFIASGILSIIT) threads the bilayer. Over 106 to 121 (ERKSTKPLVDASLTLN) the chain is Cytoplasmic. The helical transmembrane segment at 122-142 (ILSVSFAFVGIIIISVSLAGL) threads the bilayer. The Extracellular portion of the chain corresponds to 143–186 (HPASEQCKQSKELSLIEHDYYQPFYNSDRSECAVTKSILTGALS). A helical membrane pass occupies residues 187–207 (VMLIISVLELGLALLSAMLWL). Over 208 to 217 (REGVLTSLRM) the chain is Cytoplasmic.

It belongs to the MS4A family. In terms of tissue distribution, expressed only by thymus, spleen, peripheral lymph node and bone marrow.

The protein localises to the membrane. Functionally, may be involved in signal transduction as a component of a multimeric receptor complex. The sequence is that of Membrane-spanning 4-domains subfamily A member 6C (Ms4a6c) from Mus musculus (Mouse).